The primary structure comprises 375 residues: Succinyl-diaminopimelate desuccinylase (375 aa).

His-66 contacts Zn(2+). Asp-68 is a catalytic residue. Zn(2+) is bound at residue Asp-99. The Proton acceptor role is filled by Glu-133. Residues Glu-134, Glu-162, and His-348 each coordinate Zn(2+).

This sequence belongs to the peptidase M20A family. DapE subfamily. As to quaternary structure, homodimer. It depends on Zn(2+) as a cofactor. Co(2+) serves as cofactor.

The enzyme catalyses N-succinyl-(2S,6S)-2,6-diaminopimelate + H2O = (2S,6S)-2,6-diaminopimelate + succinate. It participates in amino-acid biosynthesis; L-lysine biosynthesis via DAP pathway; LL-2,6-diaminopimelate from (S)-tetrahydrodipicolinate (succinylase route): step 3/3. Functionally, catalyzes the hydrolysis of N-succinyl-L,L-diaminopimelic acid (SDAP), forming succinate and LL-2,6-diaminopimelate (DAP), an intermediate involved in the bacterial biosynthesis of lysine and meso-diaminopimelic acid, an essential component of bacterial cell walls. In Escherichia coli O139:H28 (strain E24377A / ETEC), this protein is Succinyl-diaminopimelate desuccinylase.